The following is a 389-amino-acid chain: Glutamate 5-kinase (389 aa).

Lys16 serves as a coordination point for ATP. Substrate is bound by residues Ser56, Asp143, and Asn155. 175 to 176 (SD) is an ATP binding site. Residues 281–358 (AGELHVDDGA…AEIEAILGYA (78 aa)) enclose the PUA domain.

This sequence belongs to the glutamate 5-kinase family.

The protein localises to the cytoplasm. It catalyses the reaction L-glutamate + ATP = L-glutamyl 5-phosphate + ADP. It functions in the pathway amino-acid biosynthesis; L-proline biosynthesis; L-glutamate 5-semialdehyde from L-glutamate: step 1/2. Catalyzes the transfer of a phosphate group to glutamate to form L-glutamate 5-phosphate. This is Glutamate 5-kinase from Rhizobium etli (strain CIAT 652).